The chain runs to 363 residues: NADH-quinone oxidoreductase subunit H (363 aa).

The next 10 helical transmembrane spans lie at 29–49 (VLKI…YVVW), 62–82 (GPMY…KLLF), 96–116 (FIIA…VVPF), 127–147 (VGLL…ILAG), 163–183 (AAQV…VMIA), 202–222 (FFDW…VSGV), 238–257 (EIVA…LFFL), 264–286 (ILVS…QGWV), 299–319 (KGGW…YIWF), and 339–359 (FIPL…YGVI).

The protein belongs to the complex I subunit 1 family. NDH-1 is composed of 14 different subunits. Subunits NuoA, H, J, K, L, M, N constitute the membrane sector of the complex.

It is found in the cell inner membrane. It carries out the reaction a quinone + NADH + 5 H(+)(in) = a quinol + NAD(+) + 4 H(+)(out). Functionally, NDH-1 shuttles electrons from NADH, via FMN and iron-sulfur (Fe-S) centers, to quinones in the respiratory chain. The immediate electron acceptor for the enzyme in this species is believed to be ubiquinone. Couples the redox reaction to proton translocation (for every two electrons transferred, four hydrogen ions are translocated across the cytoplasmic membrane), and thus conserves the redox energy in a proton gradient. This subunit may bind ubiquinone. The sequence is that of NADH-quinone oxidoreductase subunit H from Xanthomonas oryzae pv. oryzae (strain PXO99A).